An 809-amino-acid chain; its full sequence is LPS-assembly protein LptD (809 aa).

Positions 1 to 22 (MRRALRLLPLPLSIAICLPAMA) are cleaved as a signal peptide.

Belongs to the LptD family. Component of the lipopolysaccharide transport and assembly complex. Interacts with LptE and LptA.

The protein localises to the cell outer membrane. Functionally, together with LptE, is involved in the assembly of lipopolysaccharide (LPS) at the surface of the outer membrane. The polypeptide is LPS-assembly protein LptD (Xanthomonas campestris pv. campestris (strain 8004)).